The chain runs to 497 residues: Long chain base biosynthesis protein 2c (497 aa).

The helical transmembrane segment at 4-24 (VPFVTAVTTVFSYGVIFGFGH) threads the bilayer. Lysine 319 bears the N6-(pyridoxal phosphate)lysine mark.

The protein belongs to the class-II pyridoxal-phosphate-dependent aminotransferase family. Heterodimer with LCB1. Component of the serine palmitoyltransferase (SPT) complex, composed of LCB1 and LCB2. It depends on pyridoxal 5'-phosphate as a cofactor.

Its subcellular location is the endoplasmic reticulum membrane. It catalyses the reaction L-serine + hexadecanoyl-CoA + H(+) = 3-oxosphinganine + CO2 + CoA. It participates in lipid metabolism; sphingolipid metabolism. Its function is as follows. Serine palmitoyltransferase (SPT). The heterodimer formed with LCB1 constitutes the catalytic core. The sequence is that of Long chain base biosynthesis protein 2c from Oryza sativa subsp. japonica (Rice).